The primary structure comprises 203 residues: Large ribosomal subunit protein bL25 (203 aa).

It belongs to the bacterial ribosomal protein bL25 family. CTC subfamily. In terms of assembly, part of the 50S ribosomal subunit; part of the 5S rRNA/L5/L18/L25 subcomplex. Contacts the 5S rRNA. Binds to the 5S rRNA independently of L5 and L18.

Its function is as follows. This is one of the proteins that binds to the 5S RNA in the ribosome where it forms part of the central protuberance. This chain is Large ribosomal subunit protein bL25, found in Wolbachia pipientis subsp. Culex pipiens (strain wPip).